A 161-amino-acid chain; its full sequence is MSNSSKKHLDLPYRPGVGMMILNANNHIFVGKRIDTKISAWQMPQGGIVPGETPSIAAMREMLEEIGSDKGYIIAESKFWYSYDVPSFLIPKLWNGNFRGQKQRWFLIRFTGNNEDININTSNPEFDQWRWASLDELLSIIIPFKRKLYQAVVKEFESLIQ.

One can recognise a Nudix hydrolase domain in the interval 12–154 (PYRPGVGMMI…KRKLYQAVVK (143 aa)). Residues 46–67 (GGIVPGETPSIAAMREMLEEIG) carry the Nudix box motif.

This sequence belongs to the Nudix hydrolase family. RppH subfamily. A divalent metal cation is required as a cofactor.

In terms of biological role, accelerates the degradation of transcripts by removing pyrophosphate from the 5'-end of triphosphorylated RNA, leading to a more labile monophosphorylated state that can stimulate subsequent ribonuclease cleavage. The polypeptide is RNA pyrophosphohydrolase (Rickettsia conorii (strain ATCC VR-613 / Malish 7)).